The following is a 266-amino-acid chain: Eukaryotic translation initiation factor 3 subunit J (266 aa).

2 disordered regions span residues 1–142 and 215–243; these read MAPS…VSDS and MSNEKMREERAADKGNKKSKAAKTKVSLV. Residues 26 to 44 are compositionally biased toward acidic residues; that stretch reads DEEEEDVLDSWDAAEDSEV. Residues 40–99 are a coiled coil; the sequence is EDSEVEREKAAKAAEAKAKAEAEAAAKKKSKAQRIQEHKEERKKREEEDSSSESEEDEAE. 2 stretches are compositionally biased toward basic and acidic residues: residues 45–65 and 73–86; these read EREKAAKAAEAKAKAEAEAAA and RIQEHKEERKKREE. Residues 87–97 show a composition bias toward acidic residues; that stretch reads EDSSSESEEDE. Composition is skewed to basic and acidic residues over residues 98–118 and 218–230; these read AERRARLRRTEKDSDLKHAED and EKMREERAADKGN.

This sequence belongs to the eIF-3 subunit J family. Component of the eukaryotic translation initiation factor 3 (eIF-3) complex.

It is found in the cytoplasm. Component of the eukaryotic translation initiation factor 3 (eIF-3) complex, which is involved in protein synthesis of a specialized repertoire of mRNAs and, together with other initiation factors, stimulates binding of mRNA and methionyl-tRNAi to the 40S ribosome. The eIF-3 complex specifically targets and initiates translation of a subset of mRNAs involved in cell proliferation. In Aspergillus terreus (strain NIH 2624 / FGSC A1156), this protein is Eukaryotic translation initiation factor 3 subunit J (hcr1).